The following is a 346-amino-acid chain: Elongation factor Ts (346 aa).

An involved in Mg(2+) ion dislocation from EF-Tu region spans residues 80–83; sequence TDFV.

It belongs to the EF-Ts family.

The protein localises to the cytoplasm. Associates with the EF-Tu.GDP complex and induces the exchange of GDP to GTP. It remains bound to the aminoacyl-tRNA.EF-Tu.GTP complex up to the GTP hydrolysis stage on the ribosome. This Streptococcus pneumoniae serotype 19F (strain G54) protein is Elongation factor Ts.